A 376-amino-acid polypeptide reads, in one-letter code: Erythronate-4-phosphate dehydrogenase (376 aa).

Serine 45 and threonine 67 together coordinate substrate. Aspartate 147 is an NAD(+) binding site. Arginine 209 is an active-site residue. NAD(+) is bound at residue aspartate 233. Residue glutamate 238 is part of the active site. The active-site Proton donor is histidine 255. Glycine 258 contacts NAD(+). Residue tyrosine 259 coordinates substrate.

The protein belongs to the D-isomer specific 2-hydroxyacid dehydrogenase family. PdxB subfamily. In terms of assembly, homodimer.

Its subcellular location is the cytoplasm. It catalyses the reaction 4-phospho-D-erythronate + NAD(+) = (R)-3-hydroxy-2-oxo-4-phosphooxybutanoate + NADH + H(+). The protein operates within cofactor biosynthesis; pyridoxine 5'-phosphate biosynthesis; pyridoxine 5'-phosphate from D-erythrose 4-phosphate: step 2/5. Catalyzes the oxidation of erythronate-4-phosphate to 3-hydroxy-2-oxo-4-phosphonooxybutanoate. This chain is Erythronate-4-phosphate dehydrogenase, found in Shewanella halifaxensis (strain HAW-EB4).